We begin with the raw amino-acid sequence, 339 residues long: UDP-3-O-acylglucosamine N-acyltransferase (339 aa).

Residue histidine 238 is the Proton acceptor of the active site.

This sequence belongs to the transferase hexapeptide repeat family. LpxD subfamily. As to quaternary structure, homotrimer.

It carries out the reaction a UDP-3-O-[(3R)-3-hydroxyacyl]-alpha-D-glucosamine + a (3R)-hydroxyacyl-[ACP] = a UDP-2-N,3-O-bis[(3R)-3-hydroxyacyl]-alpha-D-glucosamine + holo-[ACP] + H(+). The protein operates within bacterial outer membrane biogenesis; LPS lipid A biosynthesis. In terms of biological role, catalyzes the N-acylation of UDP-3-O-acylglucosamine using 3-hydroxyacyl-ACP as the acyl donor. Is involved in the biosynthesis of lipid A, a phosphorylated glycolipid that anchors the lipopolysaccharide to the outer membrane of the cell. The polypeptide is UDP-3-O-acylglucosamine N-acyltransferase (Aeromonas hydrophila subsp. hydrophila (strain ATCC 7966 / DSM 30187 / BCRC 13018 / CCUG 14551 / JCM 1027 / KCTC 2358 / NCIMB 9240 / NCTC 8049)).